A 367-amino-acid polypeptide reads, in one-letter code: Probable alcohol dehydrogenase adh (367 aa).

Cys43, His64, Cys97, Cys100, Cys103, Cys111, and Asn163 together coordinate Zn(2+).

The protein belongs to the zinc-containing alcohol dehydrogenase family. Zn(2+) is required as a cofactor.

It carries out the reaction a primary alcohol + NAD(+) = an aldehyde + NADH + H(+). The enzyme catalyses a secondary alcohol + NAD(+) = a ketone + NADH + H(+). In Mycobacterium tuberculosis (strain CDC 1551 / Oshkosh), this protein is Probable alcohol dehydrogenase adh (adh).